We begin with the raw amino-acid sequence, 1555 residues long: Glycogen debranching enzyme (1555 aa).

S87 is subject to Phosphoserine. Residues D549, H552, and D650 contribute to the active site.

It belongs to the glycogen debranching enzyme family. As to quaternary structure, monomer. Interacts with NHLRC1/malin. The N-terminus is blocked. In terms of processing, ubiquitinated.

The protein localises to the cytoplasm. The catalysed reaction is Transfers a segment of a (1-&gt;4)-alpha-D-glucan to a new position in an acceptor, which may be glucose or a (1-&gt;4)-alpha-D-glucan.. It carries out the reaction Hydrolysis of (1-&gt;6)-alpha-D-glucosidic branch linkages in glycogen phosphorylase limit dextrin.. Its function is as follows. Multifunctional enzyme acting as 1,4-alpha-D-glucan:1,4-alpha-D-glucan 4-alpha-D-glycosyltransferase and amylo-1,6-glucosidase in glycogen degradation. The polypeptide is Glycogen debranching enzyme (AGL) (Oryctolagus cuniculus (Rabbit)).